We begin with the raw amino-acid sequence, 20 residues long: Basic phospholipase A2 cannitoxin alpha chain (20 aa).

In terms of assembly, heterotrimer of alpha, beta, and gamma chains; non-covalently linked. Ca(2+) is required as a cofactor. Expressed by the venom gland.

It is found in the secreted. The catalysed reaction is a 1,2-diacyl-sn-glycero-3-phosphocholine + H2O = a 1-acyl-sn-glycero-3-phosphocholine + a fatty acid + H(+). Heterotrimer: Snake venom phospholipase A2 (PLA2) heterotrimer that acts as a potent presynaptic neurotoxin by blocking synaptic transmission and synaptic vesicle recycling. Enzymatic activity is essential for the neurotoxic effects. May act by binding in a calcium-dependent fashion to neurotonal pentraxin-1 (NPTX1) and neurotonal pentraxin-2 (NPTX2), but not to neuronal pentraxin receptor (NPTXR). Also binds to taipoxin-associated calcium binding protein 49 (RCN2), a protein localized in the lumen of endoplasmic reticulum. Its function is as follows. Monomer (alpha chain): Snake venom phospholipase A2 (PLA2) that possesses a low level of presynaptic activity and the same high enzymatic activity than the heterotrimer. PLA2 catalyzes the calcium-dependent hydrolysis of the 2-acyl groups in 3-sn-phosphoglycerides. The polypeptide is Basic phospholipase A2 cannitoxin alpha chain (Oxyuranus scutellatus canni (Papuan taipan)).